The chain runs to 261 residues: Glutamate racemase (261 aa).

Substrate is bound by residues 12–13 and 44–45; these read DS and YG. Catalysis depends on C76, which acts as the Proton donor/acceptor. Residue 77-78 coordinates substrate; it reads NT. Residue C180 is the Proton donor/acceptor of the active site. 181–182 contacts substrate; that stretch reads TH.

It belongs to the aspartate/glutamate racemases family.

The catalysed reaction is L-glutamate = D-glutamate. It functions in the pathway cell wall biogenesis; peptidoglycan biosynthesis. Functionally, provides the (R)-glutamate required for cell wall biosynthesis. This Borreliella burgdorferi (strain ATCC 35210 / DSM 4680 / CIP 102532 / B31) (Borrelia burgdorferi) protein is Glutamate racemase.